A 202-amino-acid polypeptide reads, in one-letter code: NADH-ubiquinone oxidoreductase chain 6 (202 aa).

The next 5 membrane-spanning stretches (helical) occupy residues 1–21 (MVTM…IMVI), 29–49 (SVFW…LLGV), 52–72 (IALM…LFVI), 96–116 (VPIG…SWLI), and 156–176 (YYLF…AIVL).

Belongs to the complex I subunit 6 family.

The protein localises to the mitochondrion membrane. It catalyses the reaction a ubiquinone + NADH + 5 H(+)(in) = a ubiquinol + NAD(+) + 4 H(+)(out). Functionally, core subunit of the mitochondrial membrane respiratory chain NADH dehydrogenase (Complex I) that is believed to belong to the minimal assembly required for catalysis. Complex I functions in the transfer of electrons from NADH to the respiratory chain. The immediate electron acceptor for the enzyme is believed to be ubiquinone. The protein is NADH-ubiquinone oxidoreductase chain 6 (ND6) of Metridium senile (Brown sea anemone).